A 246-amino-acid chain; its full sequence is MyoD family inhibitor domain-containing protein (246 aa).

2 disordered regions span residues 1–93 and 134–164; these read MSQE…EEET and KIQS…ASPE. At 1-170 the chain is on the extracellular side; that stretch reads MSQEREPFSP…ASPEDGCVHC (170 aa). Polar residues predominate over residues 63-87; the sequence is EDNSNSQPIKAQPQRLPQPNTSALE. One can recognise an MDFI domain in the interval 74–246; sequence QPQRLPQPNT…MECCGICFPS (173 aa). Residues 171-188 traverse the membrane as a helical segment; it reads ILTCLFCEFLTLCNIVVG. Topologically, residues 189–246 are cytoplasmic; sequence QASCGICTSEACCCCCTEEMGDDCNCPCDMDCGIMDACCESSDCLEICMECCGICFPS.

The protein belongs to the MDFI family. Expressed broadly at a low level in the early embryo.

It is found in the cytoplasm. The protein resides in the cell membrane. The protein localises to the secreted. Functionally, required to control the activity of various transcription factors through their sequestration in the cytoplasm. Retains nuclear Zic proteins in the cytoplasm and inhibits their transcriptional activation. Required for dorsoanterior development. Necessary for siamois to activate downstream target genes, including gsc, during execution of the dorsal organizer program. Also regulates the transcriptional activity of TCF7L1/TCF3 by interacting directly with TCF7L1/TCF3 and preventing it from binding DNA. Involved in the development of lymphatic vessel valves. It is required to promote lymphatic endothelial cell migration, in a process that involves down-regulation of integrin beta 1 activation and control of cell adhesion to the extracellular matrix. This Xenopus laevis (African clawed frog) protein is MyoD family inhibitor domain-containing protein.